The following is a 457-amino-acid chain: MDSFKVVLEGPAPWGFRLQGGKDFNVPLSISRLTPGGKAAQAGVAVGDWVLSIDGENAGSLTHIEAQNKIRACGERLSLGLSRAQPVQSKPQKASAPAADPPRYTFAPSVSLNKTARPFGAPPPADSAPQQNGQPLRPLVPDASKQRLMENTEDWRPRPGTGQSRSFRILAHLTGTEFMQDPDEEHLKKSSQVPRTEAPAPASSTPQEPWPGPTAPSPTSRPPWAVDPAFAERYAPDKTSTVLTRHSQPATPTPLQSRTSIVQAAAGGVPGGGSNNGKTPVCHQCHKVIRGRYLVALGHAYHPEEFVCSQCGKVLEEGGFFEEKGAIFCPPCYDVRYAPSCAKCKKKITGEIMHALKMTWHVHCFTCAACKTPIRNRAFYMEEGVPYCERDYEKMFGTKCHGCDFKIDAGDRFLEALGFSWHDTCFVCAICQINLEGKTFYSKKDRPLCKSHAFSHV.

The region spanning M1–Q85 is the PDZ domain. At S78 the chain carries Phosphoserine. 3 disordered regions span residues S82–D142, T176–V226, and T239–R258. R103 bears the Asymmetric dimethylarginine mark. S111 is modified (phosphoserine). Positions E208–R221 are enriched in pro residues. At S247 the chain carries Phosphoserine. LIM zinc-binding domains lie at P280–A338, P339–T398, and K399–V457.

As to quaternary structure, binds via its LIM zinc-binding 3 domain (LIM 3) to endocytic codes of INSR, but not with those of IGF1R, LDLR, TFRC, or EGFR. Interacts with various PKC isoforms through the LIM zinc-binding domains. Binds to RET in a phosphorylation-independent manner via its LIM zinc-binding domain 2 (LIM 2). Probably part of a complex with SHC and the RET dimer. Interacts with TPM2. Interacts with TBX4 and TBX5. In terms of tissue distribution, isoform 1 and isoform 2 are expressed ubiquitously, however, isoform 2 predominates in skeletal muscle, isoform 1 is more abundant in lung, spleen, leukocytes and fetal liver.

The protein localises to the cytoplasm. The protein resides in the cytoskeleton. May function as a scaffold on which the coordinated assembly of proteins can occur. May play a role as an adapter that, via its PDZ domain, localizes LIM-binding proteins to actin filaments of both skeletal muscle and nonmuscle tissues. Involved in both of the two fundamental mechanisms of bone formation, direct bone formation (e.g. embryonic flat bones mandible and cranium), and endochondral bone formation (e.g. embryonic long bone development). Plays a role during fracture repair. Involved in BMP6 signaling pathway. In Homo sapiens (Human), this protein is PDZ and LIM domain protein 7 (PDLIM7).